A 130-amino-acid polypeptide reads, in one-letter code: MAKSIRKINLRKGKRRIPRGVTHIQASFNNTIITVTDVRGQVVSWSSAGACGFKGTKKSTPFAAQTAAENAIRILIDQGMKQAEVMISGPGPGRDTALRAIRRSGVVLSYVRDVTPIPHNGCRPPKKRRV.

It belongs to the universal ribosomal protein uS11 family. As to quaternary structure, part of the 30S ribosomal subunit.

Its subcellular location is the plastid. The protein localises to the chloroplast. The sequence is that of Small ribosomal subunit protein uS11c from Anthoceros angustus (Hornwort).